The primary structure comprises 104 residues: Flagellar hook-basal body complex protein FliE (104 aa).

The protein belongs to the FliE family.

Its subcellular location is the bacterial flagellum basal body. This Pectobacterium carotovorum subsp. carotovorum (strain PC1) protein is Flagellar hook-basal body complex protein FliE.